The primary structure comprises 221 residues: Capsid protein (221 aa).

Positions 1–24 (MSSSQKKAGGKAGKPTKRSQNYAA) are disordered. N-acetylserine; by host is present on Ser2.

Belongs to the alphamovirus/ilarvirus capsid protein family.

It is found in the virion. In terms of biological role, capsid protein. Binds to the to the 3' end of the nonpolyadenylated viral RNA and is involved in viral RNA translation initiation. Probably binds RNA and plays a role in packaging. This Alfalfa mosaic virus (AMV) protein is Capsid protein.